The primary structure comprises 151 residues: Cytochrome c-type biogenesis protein CcmE (151 aa).

Residues 1 to 8 lie on the Cytoplasmic side of the membrane; the sequence is MNPQRKKR. Residues 9–29 form a helical; Signal-anchor for type II membrane protein membrane-spanning segment; sequence LFLILGLLAGVAVAVGFALSA. Residues 30–151 are Periplasmic-facing; it reads LQQNINLFYT…QAASGAEAKP (122 aa). The heme site is built by H124 and Y128.

The protein belongs to the CcmE/CycJ family.

The protein localises to the cell inner membrane. Functionally, heme chaperone required for the biogenesis of c-type cytochromes. Transiently binds heme delivered by CcmC and transfers the heme to apo-cytochromes in a process facilitated by CcmF and CcmH. This chain is Cytochrome c-type biogenesis protein CcmE, found in Pseudomonas putida (strain W619).